Consider the following 397-residue polypeptide: Torsin-3A (397 aa).

Residues 1-25 (MLRGPWRQLWLFFLLLLPGAPEPRG) form the signal peptide. Asn-122 is a glycosylation site (N-linked (GlcNAc...) asparagine). 167–174 (GWSGTGKN) serves as a coordination point for ATP.

Belongs to the ClpA/ClpB family. Torsin subfamily. As to quaternary structure, may not form homohexamers. N-glycosylated. In terms of tissue distribution, ubiquitously expressed. Highest expression in stomach, salivary glands and lymph nodes. Isoform 2 is expressed in placenta.

The protein resides in the cytoplasm. The protein localises to the endoplasmic reticulum lumen. In Homo sapiens (Human), this protein is Torsin-3A (TOR3A).